The sequence spans 364 residues: Guanine nucleotide-binding protein alpha-8 subunit (364 aa).

G2 carries the N-myristoyl glycine lipid modification. C5 carries the S-palmitoyl cysteine lipid modification. In terms of domain architecture, G-alpha spans 38–364 (KILKLLILGP…QHTMQKVGIQ (327 aa)). The segment at 41-54 (KLLILGPGESGKST) is G1 motif. Residues 46 to 53 (GPGESGKS), 186 to 192 (LKSRVPT), 211 to 215 (DVGGQ), 280 to 283 (NKID), and A336 contribute to the GTP site. S53 and T192 together coordinate Mg(2+). Positions 184–192 (DILKSRVPT) are G2 motif. The tract at residues 207–216 (FKIFDVGGQR) is G3 motif. Positions 276–283 (ILFLNKID) are G4 motif. A G5 motif region spans residues 334–339 (TCATDT).

Belongs to the G-alpha family. In terms of assembly, g proteins are composed of 3 units; alpha, beta and gamma. The alpha chain contains the guanine nucleotide binding site.

Guanine nucleotide-binding proteins (G proteins) are involved as modulators or transducers in various transmembrane signaling systems. In Caenorhabditis briggsae, this protein is Guanine nucleotide-binding protein alpha-8 subunit (gpa-8).